The primary structure comprises 681 residues: Sterile alpha motif domain-containing protein 11 (681 aa).

4 disordered regions span residues 41 to 77, 212 to 234, 251 to 307, and 407 to 498; these read RNLKKERTPSFSASDGDSDGSGPTCGRRPGLKQEDGP, YHLGLPSHGEDPPWHDPPHHLPS, GPSG…APHV, and LLAL…GAEG. Lys-72 is covalently cross-linked (Glycyl lysine isopeptide (Lys-Gly) (interchain with G-Cter in SUMO2)). Residues 219-234 show a composition bias toward basic and acidic residues; the sequence is HGEDPPWHDPPHHLPS. A compositionally biased stretch (pro residues) spans 412-423; sequence PQGPPGSGPPTP. Thr-485 carries the post-translational modification Phosphothreonine. Positions 543 to 608 constitute an SAM domain; that stretch reads WTVDDVCSFV…AQVARRLGRV (66 aa). Residues 625–681 form a disordered region; sequence LRAPERELGTGEQPLSPTTATSPYGGGHALAGQTSPKQENGTLALLPGAPDPSQPLC. 2 stretches are compositionally biased toward polar residues: residues 637–646 and 656–665; these read QPLSPTTATS and GQTSPKQENG. Ser-640 bears the Phosphoserine mark.

As to quaternary structure, self-associates. Component of a Polycomb group (PcG) multiprotein PRC1-like complex. Interacts with SAMD7 and PHC2. In terms of tissue distribution, expressed in the outer and inner nuclear layers, ganglion cell layer and rod photoreceptors of the retina (at protein level). Widely expressed, showing the highest expression in kidney, prostate and retina.

The protein resides in the nucleus. In terms of biological role, component of a Polycomb group (PcG) multiprotein PRC1-like complex, essential for establishing rod photoreceptor cell identity and function by silencing nonrod gene expression in developing rod photoreceptor cells. The protein is Sterile alpha motif domain-containing protein 11 (SAMD11) of Homo sapiens (Human).